The chain runs to 205 residues: GTP cyclohydrolase-2 (205 aa).

49–53 (RIHSE) contributes to the GTP binding site. The Zn(2+) site is built by Cys-54, Cys-65, and Cys-67. GTP is bound by residues Gln-70, 92 to 94 (EGR), and Thr-114. The Proton acceptor role is filled by Asp-126. The active-site Nucleophile is the Arg-128. The GTP site is built by Thr-149 and Lys-154.

Belongs to the GTP cyclohydrolase II family. The cofactor is Zn(2+).

It carries out the reaction GTP + 4 H2O = 2,5-diamino-6-hydroxy-4-(5-phosphoribosylamino)-pyrimidine + formate + 2 phosphate + 3 H(+). Its pathway is cofactor biosynthesis; riboflavin biosynthesis; 5-amino-6-(D-ribitylamino)uracil from GTP: step 1/4. Its function is as follows. Catalyzes the conversion of GTP to 2,5-diamino-6-ribosylamino-4(3H)-pyrimidinone 5'-phosphate (DARP), formate and pyrophosphate. The polypeptide is GTP cyclohydrolase-2 (Shewanella loihica (strain ATCC BAA-1088 / PV-4)).